The sequence spans 121 residues: MTQLNSFFYVSDNTGVKKIFSIQNITRNSFLVNTTDIILGIIKEISFKSSFKYSEIVYGFVVRLKKTQNIQNRYNYIFNENAVILIDKNFNPLGTRIFGLFPENLKNNNYLKLNSLVLNII.

This sequence belongs to the universal ribosomal protein uL14 family. As to quaternary structure, part of the 50S ribosomal subunit.

It localises to the plastid. The protein resides in the apicoplast. Binds to 23S rRNA. The protein is Large ribosomal subunit protein uL14c (rpl14) of Toxoplasma gondii.